A 218-amino-acid polypeptide reads, in one-letter code: Large ribosomal subunit protein uL3c (218 aa).

The tract at residues 127–161 (GFSRGPMTHGSKNHREPGSTGAGTTPGRIYPGKRM) is disordered.

It belongs to the universal ribosomal protein uL3 family. Part of the 50S ribosomal subunit.

It is found in the plastid. The protein resides in the organellar chromatophore. Functionally, one of the primary rRNA binding proteins, it binds directly near the 3'-end of the 23S rRNA, where it nucleates assembly of the 50S subunit. The chain is Large ribosomal subunit protein uL3c (rpl3) from Paulinella chromatophora.